Consider the following 281-residue polypeptide: Putative glutamine amidotransferase-like protein RP404 (281 aa).

The 263-residue stretch at 19-281 (KYTYADFPWY…KALVKASKYI (263 aa)) folds into the Glutamine amidotransferase type-1 domain. Residues 139–174 (RHFSKLTYSKKFECNTEAFATTVYTLPIKLEFENAP) enclose the RPE1 insert domain.

The polypeptide is Putative glutamine amidotransferase-like protein RP404 (Rickettsia prowazekii (strain Madrid E)).